The following is a 259-amino-acid chain: Ubiquinone/menaquinone biosynthesis C-methyltransferase UbiE (259 aa).

Residues threonine 82, aspartate 103, 131–132 (NA), and serine 148 contribute to the S-adenosyl-L-methionine site.

Belongs to the class I-like SAM-binding methyltransferase superfamily. MenG/UbiE family.

The enzyme catalyses a 2-demethylmenaquinol + S-adenosyl-L-methionine = a menaquinol + S-adenosyl-L-homocysteine + H(+). It catalyses the reaction a 2-methoxy-6-(all-trans-polyprenyl)benzene-1,4-diol + S-adenosyl-L-methionine = a 5-methoxy-2-methyl-3-(all-trans-polyprenyl)benzene-1,4-diol + S-adenosyl-L-homocysteine + H(+). It participates in quinol/quinone metabolism; menaquinone biosynthesis; menaquinol from 1,4-dihydroxy-2-naphthoate: step 2/2. The protein operates within cofactor biosynthesis; ubiquinone biosynthesis. In terms of biological role, methyltransferase required for the conversion of demethylmenaquinol (DMKH2) to menaquinol (MKH2) and the conversion of 2-polyprenyl-6-methoxy-1,4-benzoquinol (DDMQH2) to 2-polyprenyl-3-methyl-6-methoxy-1,4-benzoquinol (DMQH2). The sequence is that of Ubiquinone/menaquinone biosynthesis C-methyltransferase UbiE from Vibrio campbellii (strain ATCC BAA-1116).